The sequence spans 483 residues: Protein nucleotidyltransferase YdiU (483 aa).

ATP contacts are provided by Gly-100, Gly-102, Arg-103, Lys-123, Asp-135, Gly-136, Arg-189, and Arg-196. Residue Asp-265 is the Proton acceptor of the active site. Residues Asn-266 and Asp-275 each coordinate Mg(2+). An ATP-binding site is contributed by Asp-275.

The protein belongs to the SELO family. Mg(2+) is required as a cofactor. Mn(2+) serves as cofactor.

It catalyses the reaction L-seryl-[protein] + ATP = 3-O-(5'-adenylyl)-L-seryl-[protein] + diphosphate. It carries out the reaction L-threonyl-[protein] + ATP = 3-O-(5'-adenylyl)-L-threonyl-[protein] + diphosphate. The catalysed reaction is L-tyrosyl-[protein] + ATP = O-(5'-adenylyl)-L-tyrosyl-[protein] + diphosphate. The enzyme catalyses L-histidyl-[protein] + UTP = N(tele)-(5'-uridylyl)-L-histidyl-[protein] + diphosphate. It catalyses the reaction L-seryl-[protein] + UTP = O-(5'-uridylyl)-L-seryl-[protein] + diphosphate. It carries out the reaction L-tyrosyl-[protein] + UTP = O-(5'-uridylyl)-L-tyrosyl-[protein] + diphosphate. Nucleotidyltransferase involved in the post-translational modification of proteins. It can catalyze the addition of adenosine monophosphate (AMP) or uridine monophosphate (UMP) to a protein, resulting in modifications known as AMPylation and UMPylation. In Gloeobacter violaceus (strain ATCC 29082 / PCC 7421), this protein is Protein nucleotidyltransferase YdiU.